The following is a 331-amino-acid chain: Biotin synthase (331 aa).

The Radical SAM core domain occupies 43–267; that stretch reads NTVQVSTLLS…LMPASYVRLS (225 aa). Residues cysteine 58, cysteine 62, and cysteine 65 each coordinate [4Fe-4S] cluster. Residues cysteine 102, cysteine 133, cysteine 193, and arginine 265 each coordinate [2Fe-2S] cluster.

Belongs to the radical SAM superfamily. Biotin synthase family. As to quaternary structure, homodimer. Requires [4Fe-4S] cluster as cofactor. [2Fe-2S] cluster is required as a cofactor.

The enzyme catalyses (4R,5S)-dethiobiotin + (sulfur carrier)-SH + 2 reduced [2Fe-2S]-[ferredoxin] + 2 S-adenosyl-L-methionine = (sulfur carrier)-H + biotin + 2 5'-deoxyadenosine + 2 L-methionine + 2 oxidized [2Fe-2S]-[ferredoxin]. It participates in cofactor biosynthesis; biotin biosynthesis; biotin from 7,8-diaminononanoate: step 2/2. In terms of biological role, catalyzes the conversion of dethiobiotin (DTB) to biotin by the insertion of a sulfur atom into dethiobiotin via a radical-based mechanism. This is Biotin synthase from Alkalilimnicola ehrlichii (strain ATCC BAA-1101 / DSM 17681 / MLHE-1).